A 133-amino-acid polypeptide reads, in one-letter code: Fluoride-specific ion channel FluC (133 aa).

4 helical membrane-spanning segments follow: residues 5 to 25 (VPAT…LGAL), 43 to 63 (VATL…YVVI), 76 to 96 (VIMI…IESL), and 108 to 128 (ISYV…AIVL). The Na(+) site is built by Gly83 and Thr86.

The protein belongs to the fluoride channel Fluc/FEX (TC 1.A.43) family.

The protein localises to the cell inner membrane. The catalysed reaction is fluoride(in) = fluoride(out). Its activity is regulated as follows. Na(+) is not transported, but it plays an essential structural role and its presence is essential for fluoride channel function. Fluoride-specific ion channel. Important for reducing fluoride concentration in the cell, thus reducing its toxicity. The sequence is that of Fluoride-specific ion channel FluC from Saccharophagus degradans (strain 2-40 / ATCC 43961 / DSM 17024).